The chain runs to 454 residues: Inner membrane permease YgbN (454 aa).

Position 1 (Met-1) is a topological domain, periplasmic. The chain crosses the membrane as a helical span at residues 2–22 (STITLLCIALAGVIMLLLLVI). Over 23 to 27 (KAKVQ) the chain is Cytoplasmic. A helical transmembrane segment spans residues 28-48 (PFVALLLVSLLVALAAGIPAG). The Periplasmic portion of the chain corresponds to 49–52 (EVGK). The chain crosses the membrane as a helical span at residues 53-73 (VMIAGMGGVLGSVTIIIGLGA). At 74-108 (MLGRMIEHSGGAESLANYFSRKLGDKRTIAALTLA) the chain is on the cytoplasmic side. A helical membrane pass occupies residues 109 to 129 (AFFLGIPVFFDVGFIILAPII). At 130–137 (YGFAKVAK) the chain is on the periplasmic side. A helical transmembrane segment spans residues 138-158 (ISPLKFGLPVAGIMLTVHVAV). The Cytoplasmic segment spans residues 159 to 174 (PPHPGPVAAAGLLHAD). Residues 175–195 (IGWLTIIGIAISIPVGVVGYF) traverse the membrane as a helical segment. Over 196–235 (AAKIINKRQYAMSVEVLEQMQLAPASEEGATKLSDKINPP) the chain is Periplasmic. Residues 236–256 (GVALVTSLIVIPIAIIMAGTV) traverse the membrane as a helical segment. Over 257 to 273 (SATLMPPSHPLLGTLQL) the chain is Cytoplasmic. A helical membrane pass occupies residues 274 to 294 (IGSPMVALMIALVLAFWLLAL). At 295-305 (RRGWSLQHTSD) the chain is on the periplasmic side. A helical membrane pass occupies residues 306 to 326 (IMGSALPTAAVVILVTGAGGV). Over 327-341 (FGKVLVESGVGKALA) the chain is Cytoplasmic. A helical transmembrane segment spans residues 342–362 (NMLQMIDLPLLPAAFIISLAL). At 363-383 (RASQGSATVAILTTGGLLSEA) the chain is on the periplasmic side. Residues 384–404 (VMGLNPIQCVLVTLAACFGGL) traverse the membrane as a helical segment. Residues 405–433 (GASHINDSGFWIVTKYLGLSVADGLKTWT) are Cytoplasmic-facing. The chain crosses the membrane as a helical span at residues 434–454 (VLTTILGFTGFLITWCVWAVI).

This sequence belongs to the GntP permease family.

It is found in the cell inner membrane. In Escherichia coli (strain K12), this protein is Inner membrane permease YgbN (ygbN).